We begin with the raw amino-acid sequence, 575 residues long: Alpha-humulene synthase (575 aa).

Residues Asp-325, Asp-329, Asp-469, and Glu-477 each contribute to the Mg(2+) site. A DDXXD motif motif is present at residues Asp-325–Asp-329.

It belongs to the terpene synthase family. Tpsa subfamily. It depends on Mg(2+) as a cofactor. Requires Mn(2+) as cofactor.

It catalyses the reaction (2E,6E)-farnesyl diphosphate = alpha-humulene + diphosphate. The protein operates within sesquiterpene biosynthesis. It functions in the pathway terpene metabolism; oleoresin biosynthesis. Functionally, terpene synthase (TPS) involved in the biosynthesis of sesquiterpene natural products included in conifer oleoresin secretions and volatile emissions; these compounds contribute to biotic and abiotic stress defense against herbivores and pathogens. Catalyzes the conversion of (2E,6E)-farnesyl diphosphate (FPP) to (1E,4E,8E)-alpha-humulene. The polypeptide is Alpha-humulene synthase (Picea glauca (White spruce)).